We begin with the raw amino-acid sequence, 101 residues long: Small ribosomal subunit protein uS10 (101 aa).

Belongs to the universal ribosomal protein uS10 family. In terms of assembly, part of the 30S ribosomal subunit.

In terms of biological role, involved in the binding of tRNA to the ribosomes. This is Small ribosomal subunit protein uS10 from Corynebacterium aurimucosum (strain ATCC 700975 / DSM 44827 / CIP 107346 / CN-1) (Corynebacterium nigricans).